The following is a 492-amino-acid chain: Glycylpeptide N-tetradecanoyltransferase (492 aa).

The span at 1 to 22 (MSDSKDRKGKAPEGQSSEKKDG) shows a compositional bias: basic and acidic residues. The interval 1–45 (MSDSKDRKGKAPEGQSSEKKDGAVNITPQMAESLLENNPALRNET) is disordered. Residues 82-85 (YKFW), 215-217 (LCI), and 223-227 (SKRLT) contribute to the tetradecanoyl-CoA site. Leu492 functions as the Proton acceptor; via carboxylate in the catalytic mechanism.

This sequence belongs to the NMT family. As to quaternary structure, monomer.

The protein localises to the cytoplasm. It carries out the reaction N-terminal glycyl-[protein] + tetradecanoyl-CoA = N-tetradecanoylglycyl-[protein] + CoA + H(+). Adds a myristoyl group to the N-terminal glycine residue of certain cellular proteins. The sequence is that of Glycylpeptide N-tetradecanoyltransferase (nmt1) from Aspergillus fumigatus (strain ATCC MYA-4609 / CBS 101355 / FGSC A1100 / Af293) (Neosartorya fumigata).